The primary structure comprises 232 residues: Ribose-5-phosphate isomerase A (232 aa).

Substrate contacts are provided by residues 28 to 31, 83 to 86, and 96 to 99; these read TGST, DGAD, and KGGG. Glu105 acts as the Proton acceptor in catalysis. Lys123 is a binding site for substrate.

Belongs to the ribose 5-phosphate isomerase family. As to quaternary structure, homodimer.

It catalyses the reaction aldehydo-D-ribose 5-phosphate = D-ribulose 5-phosphate. Its pathway is carbohydrate degradation; pentose phosphate pathway; D-ribose 5-phosphate from D-ribulose 5-phosphate (non-oxidative stage): step 1/1. Functionally, catalyzes the reversible conversion of ribose-5-phosphate to ribulose 5-phosphate. This Rhizobium leguminosarum bv. trifolii (strain WSM2304) protein is Ribose-5-phosphate isomerase A.